Consider the following 657-residue polypeptide: L-glutamate oxidase precursor (657 aa).

The N-terminal stretch at 1–12 is a signal peptide; the sequence is MTETPRDNSATR. Positions 86, 87, 95, 120, 121, 350, 639, 647, and 648 each coordinate FAD.

Belongs to the flavin monoamine oxidase family. LGOX subfamily. In terms of assembly, the mature enzyme is a heterohexamer composed of 2 alpha chains, 2 beta chains and 2 gamma chains (alpha2beta2gamma2). The cofactor is FAD. Post-translationally, the precursor form is proteolytically cleaved by an endopeptidase into alpha, beta and gamma chains, which form the stable mature enzyme.

The protein resides in the secreted. It carries out the reaction L-glutamate + O2 + H2O = H2O2 + 2-oxoglutarate + NH4(+). Proteinase K-treated enzyme exhibits improved affinity for the substrate, increased activity and increased thermostability. In terms of biological role, catalyzes the oxidative deamination of L-glutamate to 2-ketoglutarate along with the production of ammonia and hydrogen peroxide. Exhibits strict specificity for L-glutamate, and shows only very weak activity with L-glutamine. This Streptomyces diastatochromogenes protein is L-glutamate oxidase precursor.